The primary structure comprises 78 residues: Glycophorin-E (78 aa).

A signal peptide spans 1-19; it reads MYGKIIFVLLLSGIVSISA. The Extracellular segment spans residues 20–52; sequence SSTTGVAMHTSTSSSVTKSYISSQTNGITLINW. A helical transmembrane segment spans residues 53-73; the sequence is WAMARVIFEVMLVVVGMIILI. Residues 74–78 lie on the Cytoplasmic side of the membrane; sequence SYCIR.

Belongs to the glycophorin-A family. Post-translationally, the N-terminal extracellular domain is heavily glycosylated on serine and threonine residues. In terms of tissue distribution, erythrocytes.

The protein resides in the membrane. Functionally, this protein is a minor sialoglycoprotein in human erythrocyte membranes. The protein is Glycophorin-E (GYPE) of Homo sapiens (Human).